The chain runs to 579 residues: Proteasome-associated ATPase (579 aa).

The segment at 1-21 (MPRDETPEREHAEQQSRQALE) is disordered. Residues 8 to 86 (EREHAEQQSR…REEVEKLTQP (79 aa)) are a coiled coil. 268–273 (GCGKTL) lines the ATP pocket. The segment at 578–579 (YL) is docks into pockets in the proteasome alpha-ring.

It belongs to the AAA ATPase family. As to quaternary structure, homohexamer. Assembles into a hexameric ring structure that caps the 20S proteasome core. Strongly interacts with the prokaryotic ubiquitin-like protein Pup through a hydrophobic interface; the interacting region of ARC lies in its N-terminal coiled-coil domain. There is one Pup binding site per ARC hexamer ring. Upon ATP-binding, the C-terminus of ARC interacts with the alpha-rings of the proteasome core, possibly by binding to the intersubunit pockets.

The protein operates within protein degradation; proteasomal Pup-dependent pathway. In terms of biological role, ATPase which is responsible for recognizing, binding, unfolding and translocation of pupylated proteins into the bacterial 20S proteasome core particle. May be essential for opening the gate of the 20S proteasome via an interaction with its C-terminus, thereby allowing substrate entry and access to the site of proteolysis. Thus, the C-termini of the proteasomal ATPase may function like a 'key in a lock' to induce gate opening and therefore regulate proteolysis. The chain is Proteasome-associated ATPase from Acidimicrobium ferrooxidans (strain DSM 10331 / JCM 15462 / NBRC 103882 / ICP).